A 276-amino-acid chain; its full sequence is ATP synthase subunit a 2 (276 aa).

A run of 5 helical transmembrane segments spans residues 45 to 65 (AVHVDSLGWSIALGALFVWLF), 105 to 125 (VIAPLALTVFCWIFLMNLMDL), 154 to 173 (VNVTLGMSLSVFFLIIYYSI), 226 to 246 (LLFILIALMPFWAQWALSVPW), and 247 to 267 (AIFHILVIVLQAFIFMMLTIV).

This sequence belongs to the ATPase A chain family. F-type ATPases have 2 components, CF(1) - the catalytic core - and CF(0) - the membrane proton channel. CF(1) has five subunits: alpha(3), beta(3), gamma(1), delta(1), epsilon(1). CF(0) has three main subunits: a(1), b(2) and c(9-12). The alpha and beta chains form an alternating ring which encloses part of the gamma chain. CF(1) is attached to CF(0) by a central stalk formed by the gamma and epsilon chains, while a peripheral stalk is formed by the delta and b chains.

The protein localises to the cell inner membrane. In terms of biological role, key component of the proton channel; it plays a direct role in the translocation of protons across the membrane. The chain is ATP synthase subunit a 2 from Hahella chejuensis (strain KCTC 2396).